The primary structure comprises 286 residues: MTAQNIDGTLISQTVRSEVAARVKARVEAGLRAPGLAVVLVGEDPASQVYVGSKRRACEEVGFVSKSFDLPATTSEEELLALIDELNNDAEIDGILVQLPLPAGIDATHVLERIHPEKDVDGFHPYNVGRLAQRIPKLRSCTPKGIITLLDRYNIELRGKHAVVVGASNIVGRPMTLELLLAGCTTTTCHRFTKDLEGHVRQADLVVVAVGKPNFIPGEWIKKGAVVVDVGINRLESGKLVGDVEYDKARENASFITPVPGGVGPMTVASLIENTMLACEQFHTKK.

Residues 166 to 168 and Ile232 each bind NADP(+); that span reads GAS.

The protein belongs to the tetrahydrofolate dehydrogenase/cyclohydrolase family. In terms of assembly, homodimer.

The enzyme catalyses (6R)-5,10-methylene-5,6,7,8-tetrahydrofolate + NADP(+) = (6R)-5,10-methenyltetrahydrofolate + NADPH. It catalyses the reaction (6R)-5,10-methenyltetrahydrofolate + H2O = (6R)-10-formyltetrahydrofolate + H(+). Its pathway is one-carbon metabolism; tetrahydrofolate interconversion. Its function is as follows. Catalyzes the oxidation of 5,10-methylenetetrahydrofolate to 5,10-methenyltetrahydrofolate and then the hydrolysis of 5,10-methenyltetrahydrofolate to 10-formyltetrahydrofolate. The sequence is that of Bifunctional protein FolD from Vibrio campbellii (strain ATCC BAA-1116).